The primary structure comprises 131 residues: Mediator of RNA polymerase II transcription subunit 31 (131 aa).

The residue at position 2 (Ala-2) is an N-acetylalanine.

Belongs to the Mediator complex subunit 31 family. As to quaternary structure, component of the Mediator complex, which is composed of MED1, MED4, MED6, MED7, MED8, MED9, MED10, MED11, MED12, MED13, MED13L, MED14, MED15, MED16, MED17, MED18, MED19, MED20, MED21, MED22, MED23, MED24, MED25, MED26, MED27, MED29, MED30, MED31, CCNC, CDK8 and CDC2L6/CDK11. The MED12, MED13, CCNC and CDK8 subunits form a distinct module termed the CDK8 module. Mediator containing the CDK8 module is less active than Mediator lacking this module in supporting transcriptional activation. Individual preparations of the Mediator complex lacking one or more distinct subunits have been variously termed ARC, CRSP, DRIP, PC2, SMCC and TRAP.

It is found in the nucleus. Component of the Mediator complex, a coactivator involved in the regulated transcription of nearly all RNA polymerase II-dependent genes. Mediator functions as a bridge to convey information from gene-specific regulatory proteins to the basal RNA polymerase II transcription machinery. Mediator is recruited to promoters by direct interactions with regulatory proteins and serves as a scaffold for the assembly of a functional preinitiation complex with RNA polymerase II and the general transcription factors. The protein is Mediator of RNA polymerase II transcription subunit 31 (MED31) of Bos taurus (Bovine).